The sequence spans 443 residues: ASTRA-associated protein 1 (443 aa).

4 WD repeats span residues 23–67, 71–110, 258–295, and 318–359; these read YHKR…PITH, EGNS…QLSI, HYPN…QLET, and KVHL…VEQT. Residues 372–391 form a disordered region; the sequence is SSMGDLTNGSGSNTESSSKS. Residues 378–391 are compositionally biased toward low complexity; that stretch reads TNGSGSNTESSSKS.

It belongs to the WD repeat ASA1 family. As to quaternary structure, component of the ASTRA chromatin remodeling machinery complex composed of at least RVB1, RVB2, TRA1, TEL2, TTI1 and TTI2.

The protein resides in the nucleus. Functionally, component of the ASTRA complex involved in chromatin remodeling. This Saccharomyces cerevisiae (strain RM11-1a) (Baker's yeast) protein is ASTRA-associated protein 1 (ASA1).